A 774-amino-acid chain; its full sequence is Two pore channel protein 2 (774 aa).

Topologically, residues Met1 to Tyr92 are cytoplasmic. A helical transmembrane segment spans residues Ser93–Ile113. Residues Glu114–Glu140 are Extracellular-facing. Residues Gly141–Ile161 traverse the membrane as a helical segment. Over Gly162–Lys170 the chain is Cytoplasmic. A helical membrane pass occupies residues Trp171–Ser191. Residues Met192–Asn197 are Extracellular-facing. Residues Leu198 to Lys218 traverse the membrane as a helical segment. Residues Lys217 to Lys221 form an interaction with phosphatidylinositol 3,5-bisphosphate region. Residues Thr219–Ser232 are Cytoplasmic-facing. A helical membrane pass occupies residues Val233–Ala253. Residues Lys254–Tyr267 lie on the Extracellular side of the membrane. Residues Phe268–Ile292 constitute an intramembrane region (helical; Pore-forming). Residues Pro293–Ser302 are Extracellular-facing. The helical transmembrane segment at Ile303–Ile323 threads the bilayer. Over Ile324–Val452 the chain is Cytoplasmic. The chain crosses the membrane as a helical span at residues Leu453–Lys475. The Extracellular segment spans residues Ser476–Glu486. A helical membrane pass occupies residues Ile487–Phe507. The Cytoplasmic portion of the chain corresponds to Gly508–Asn518. A helical transmembrane segment spans residues Ile519–Phe539. The Extracellular portion of the chain corresponds to Lys540–Asn564. Residues Met565–Ala585 traverse the membrane as a helical segment. Residues Ser586–Arg596 are Cytoplasmic-facing. A helical transmembrane segment spans residues Ala597–Phe617. The Extracellular portion of the chain corresponds to Gln618–Asn658. 3 N-linked (GlcNAc...) asparagine glycosylation sites follow: Asn626, Asn632, and Asn637. Residues Phe659–Phe681 constitute an intramembrane region (helical; Pore-forming). Residues Thr682–Tyr696 lie on the Extracellular side of the membrane. A helical membrane pass occupies residues Phe697–Leu717. Residues Glu718–Trp774 lie on the Cytoplasmic side of the membrane.

The protein belongs to the calcium channel alpha-1 subunit (TC 1.A.1.11) family. Two pore calcium channel subfamily. Homodimer. Post-translationally, N-glycosylated.

It is found in the late endosome membrane. Its subcellular location is the lysosome membrane. The enzyme catalyses Na(+)(in) = Na(+)(out). It carries out the reaction Ca(2+)(in) = Ca(2+)(out). Intracellular channel initially characterized as a non-selective Ca(2+)-permeable channel activated by NAADP (nicotinic acid adenine dinucleotide phosphate), it is also a highly-selective Na(+) channel activated directly by PI(3,5)P2 (phosphatidylinositol 3,5-bisphosphate). Localizes to the lysosomal and late endosome membranes where it regulates organellar membrane excitability, membrane trafficking, and pH homeostasis. This Danio rerio (Zebrafish) protein is Two pore channel protein 2 (tpcn2).